The primary structure comprises 124 residues: Urease subunit beta (124 aa).

It belongs to the urease beta subunit family. Heterotrimer of UreA (gamma), UreB (beta) and UreC (alpha) subunits. Three heterotrimers associate to form the active enzyme.

It is found in the cytoplasm. The catalysed reaction is urea + 2 H2O + H(+) = hydrogencarbonate + 2 NH4(+). It participates in nitrogen metabolism; urea degradation; CO(2) and NH(3) from urea (urease route): step 1/1. The polypeptide is Urease subunit beta (Ureaplasma parvum serovar 3 (strain ATCC 27815 / 27 / NCTC 11736)).